The following is a 499-amino-acid chain: Kynurenine 3-monooxygenase 3 (499 aa).

Belongs to the aromatic-ring hydroxylase family. KMO subfamily. The cofactor is FAD.

It is found in the mitochondrion outer membrane. It carries out the reaction L-kynurenine + NADPH + O2 + H(+) = 3-hydroxy-L-kynurenine + NADP(+) + H2O. It functions in the pathway cofactor biosynthesis; NAD(+) biosynthesis; quinolinate from L-kynurenine: step 1/3. In terms of biological role, catalyzes the hydroxylation of L-kynurenine (L-Kyn) to form 3-hydroxy-L-kynurenine (L-3OHKyn). Required for synthesis of quinolinic acid. The sequence is that of Kynurenine 3-monooxygenase 3 (bna4-3) from Aspergillus niger (strain ATCC MYA-4892 / CBS 513.88 / FGSC A1513).